The chain runs to 150 residues: Snake venom vascular endothelial growth factor toxin barietin (150 aa).

An N-terminal signal peptide occupies residues 1 to 24; sequence MAAYLLAVAILFCIQGWPSGTVQG. At Glu-25 the chain carries Pyrrolidone carboxylic acid (Glu). Intrachain disulfides connect Cys-38/Cys-80, Cys-69/Cys-115, and Cys-73/Cys-117. Positions 119–150 are disordered; the sequence is PRSGSRVNIGKHKRSPEEGEREPSSPLTPGSL. The propeptide occupies 122 to 150; the sequence is GSRVNIGKHKRSPEEGEREPSSPLTPGSL.

Belongs to the PDGF/VEGF growth factor family. Snake venom VEGF subfamily. In terms of assembly, homodimer; disulfide-linked. Interacts with high affinity with VEGF receptor-2 (KDR), and with a lower affinity with VEGF receptor-1 (FLT1). Does not bind VEGF receptor-3 (FLT4) and neuropilin-1 (NRP1). In terms of tissue distribution, expressed by the venom gland.

It localises to the secreted. Snake venom VEGFs that may contribute to venom dispersion and prey subjugation by inducing vascular permeability and hypotension. This protein induces an increase in capillary permeability after intradermal injection, as well as a drastic hypotensive effect after intravenous injection. The hypotension is mediated by nitric oxide (NO), which is produced by VEGF-activated endothelium NO synthase. Also induces angiogenesis in vitro, probably through VEGF receptor (KDR/VEGFR-2) signaling. The chain is Snake venom vascular endothelial growth factor toxin barietin from Bitis arietans (African puff adder).